We begin with the raw amino-acid sequence, 501 residues long: uncharacterized protein (501 aa).

Glu236 serves as the catalytic Proton donor. Glu333 serves as the catalytic Nucleophile.

The protein belongs to the glycosyl hydrolase 5 (cellulase A) family.

It is found in the mitochondrion intermembrane space. This is an uncharacterized protein from Saccharomyces cerevisiae (strain ATCC 204508 / S288c) (Baker's yeast).